We begin with the raw amino-acid sequence, 61 residues long: Translational regulator CsrA (61 aa).

It belongs to the CsrA/RsmA family. Homodimer; the beta-strands of each monomer intercalate to form a hydrophobic core, while the alpha-helices form wings that extend away from the core.

It localises to the cytoplasm. A key translational regulator that binds mRNA to regulate translation initiation and/or mRNA stability. Mediates global changes in gene expression, shifting from rapid growth to stress survival by linking envelope stress, the stringent response and the catabolite repression systems. Usually binds in the 5'-UTR; binding at or near the Shine-Dalgarno sequence prevents ribosome-binding, repressing translation, binding elsewhere in the 5'-UTR can activate translation and/or stabilize the mRNA. Its function is antagonized by small RNA(s). The chain is Translational regulator CsrA from Mannheimia succiniciproducens (strain KCTC 0769BP / MBEL55E).